Here is a 624-residue protein sequence, read N- to C-terminus: DNA mismatch repair protein MutL (624 aa).

It belongs to the DNA mismatch repair MutL/HexB family.

Its function is as follows. This protein is involved in the repair of mismatches in DNA. It is required for dam-dependent methyl-directed DNA mismatch repair. May act as a 'molecular matchmaker', a protein that promotes the formation of a stable complex between two or more DNA-binding proteins in an ATP-dependent manner without itself being part of a final effector complex. This Chlorobium phaeobacteroides (strain DSM 266 / SMG 266 / 2430) protein is DNA mismatch repair protein MutL.